A 61-amino-acid chain; its full sequence is Small ribosomal subunit protein uS14 (61 aa).

Cysteine 24, cysteine 27, cysteine 40, and cysteine 43 together coordinate Zn(2+).

The protein belongs to the universal ribosomal protein uS14 family. Zinc-binding uS14 subfamily. Part of the 30S ribosomal subunit. Contacts proteins S3 and S10. The cofactor is Zn(2+).

In terms of biological role, binds 16S rRNA, required for the assembly of 30S particles and may also be responsible for determining the conformation of the 16S rRNA at the A site. This chain is Small ribosomal subunit protein uS14, found in Lachnospira eligens (strain ATCC 27750 / DSM 3376 / VPI C15-48 / C15-B4) (Eubacterium eligens).